A 330-amino-acid chain; its full sequence is Ketol-acid reductoisomerase (NADP(+)) (330 aa).

A KARI N-terminal Rossmann domain is found at leucine 3 to threonine 184. NADP(+) is bound by residues tyrosine 26–glutamine 29, serine 52, and serine 54. Histidine 109 is an active-site residue. Residue glycine 135 participates in NADP(+) binding. The KARI C-terminal knotted domain maps to serine 185–lysine 329. Mg(2+) is bound by residues aspartate 193, glutamate 197, glutamate 229, and glutamate 233. Serine 254 contacts substrate.

It belongs to the ketol-acid reductoisomerase family. It depends on Mg(2+) as a cofactor.

It catalyses the reaction (2R)-2,3-dihydroxy-3-methylbutanoate + NADP(+) = (2S)-2-acetolactate + NADPH + H(+). It carries out the reaction (2R,3R)-2,3-dihydroxy-3-methylpentanoate + NADP(+) = (S)-2-ethyl-2-hydroxy-3-oxobutanoate + NADPH + H(+). It functions in the pathway amino-acid biosynthesis; L-isoleucine biosynthesis; L-isoleucine from 2-oxobutanoate: step 2/4. Its pathway is amino-acid biosynthesis; L-valine biosynthesis; L-valine from pyruvate: step 2/4. Functionally, involved in the biosynthesis of branched-chain amino acids (BCAA). Catalyzes an alkyl-migration followed by a ketol-acid reduction of (S)-2-acetolactate (S2AL) to yield (R)-2,3-dihydroxy-isovalerate. In the isomerase reaction, S2AL is rearranged via a Mg-dependent methyl migration to produce 3-hydroxy-3-methyl-2-ketobutyrate (HMKB). In the reductase reaction, this 2-ketoacid undergoes a metal-dependent reduction by NADPH to yield (R)-2,3-dihydroxy-isovalerate. This chain is Ketol-acid reductoisomerase (NADP(+)), found in Helicobacter pylori (strain Shi470).